We begin with the raw amino-acid sequence, 341 residues long: 4-hydroxy-2-oxovalerate aldolase 2 (341 aa).

The Pyruvate carboxyltransferase domain occupies 8–260 (VTVHDMTLRD…ETGVDVAKIT (253 aa)). Residue 16-17 (RD) coordinates substrate. Residue D17 participates in Mn(2+) binding. H20 (proton acceptor) is an active-site residue. Substrate contacts are provided by S170 and H199. Mn(2+) contacts are provided by H199 and H201. Y290 contributes to the substrate binding site.

The protein belongs to the 4-hydroxy-2-oxovalerate aldolase family.

It carries out the reaction (S)-4-hydroxy-2-oxopentanoate = acetaldehyde + pyruvate. The polypeptide is 4-hydroxy-2-oxovalerate aldolase 2 (Dechloromonas aromatica (strain RCB)).